The sequence spans 79 residues: Large ribosomal subunit protein uL22 (79 aa).

The protein belongs to the universal ribosomal protein uL22 family. As to quaternary structure, part of the 50S ribosomal subunit.

In terms of biological role, this protein binds specifically to 23S rRNA; its binding is stimulated by other ribosomal proteins, e.g. L4, L17, and L20. It is important during the early stages of 50S assembly. It makes multiple contacts with different domains of the 23S rRNA in the assembled 50S subunit and ribosome. The globular domain of the protein is located near the polypeptide exit tunnel on the outside of the subunit, while an extended beta-hairpin is found that lines the wall of the exit tunnel in the center of the 70S ribosome. This Prunus armeniaca phytoplasma protein is Large ribosomal subunit protein uL22 (rplV).